The following is a 129-amino-acid chain: MARVTVEDCIDKVDNRFELVLLAAHRARMISSGAQITVDRDNDKNPVVALREIADEHVGPEDLKEDLIHSLQKYTEVDEPEPEAVPMIASGDSSGGEDSDVMLDRMTEEELLAGLQGLVPPEHTDDDEG.

The disordered stretch occupies residues 76–100 (EVDEPEPEAVPMIASGDSSGGEDSD).

Belongs to the RNA polymerase subunit omega family. In terms of assembly, the RNAP catalytic core consists of 2 alpha, 1 beta, 1 beta' and 1 omega subunit. When a sigma factor is associated with the core the holoenzyme is formed, which can initiate transcription.

It catalyses the reaction RNA(n) + a ribonucleoside 5'-triphosphate = RNA(n+1) + diphosphate. Its function is as follows. Promotes RNA polymerase assembly. Latches the N- and C-terminal regions of the beta' subunit thereby facilitating its interaction with the beta and alpha subunits. This Xanthobacter autotrophicus (strain ATCC BAA-1158 / Py2) protein is DNA-directed RNA polymerase subunit omega.